Here is a 224-residue protein sequence, read N- to C-terminus: uncharacterized protein (224 aa).

This is an uncharacterized protein from Mycobacterium tuberculosis (strain CDC 1551 / Oshkosh).